Reading from the N-terminus, the 271-residue chain is MIVVSVEASYRRVARTALREGTPATGERAVPEEVPVAFSYGGSTHAVMMASPADLIDFAVGFSLTEGIISMRSEIQAIEVVEAGQGYDVQVDLTDAEADALRARRRHMAGPVGCGLCGIESIEQAVRVVPDLSSVKSSVHGNDIVAAVKALNDAQTLNRETRAVHGAGFYNPREGLLAVREDVGRHNALDKLAGAVVNAGISAQMGIVAVTSRLSVEMVQKTAILGCPVLAAISAPTALAIETADRAGITLVALVRGEDFEIFTRADRIIL.

Cys-114 (cysteine persulfide intermediate) is an active-site residue.

The protein belongs to the FdhD family.

It localises to the cytoplasm. Its function is as follows. Required for formate dehydrogenase (FDH) activity. Acts as a sulfur carrier protein that transfers sulfur from IscS to the molybdenum cofactor prior to its insertion into FDH. The polypeptide is Sulfur carrier protein FdhD (Agrobacterium fabrum (strain C58 / ATCC 33970) (Agrobacterium tumefaciens (strain C58))).